The sequence spans 332 residues: MKVTFEQLKAAFNRALISRGVDSETADACAEMFARTTESGVYSHGVNRFPRFIQQLENGDIIPDAQPKRITSLGAIEQWDAQRSIGNLTAKKMMDRAIELAADHGIGLVALRNANHWMRGGSYGWQAAEKGYIGICWTNSIAVMPPWGAKECRIGTNPLIVAIPSTPITMVDMSMSMFSYGMLEVNRLAGRQLPVDGGFDDEGNLTKEPGVIEKNRRILPMGYWKGSGMSIVLDMIATLLSDGASVAEVTQDNSDEYGISQIFIAIEVDKLIDGPTRDAKLQRIMDYVTTAERADENQAIRLPGHEFTTLLAENRRNGITVDDSVWAKIQAL.

His44 acts as the Proton donor in catalysis. NAD(+) is bound by residues 168 to 174 (ITMVDMS), 224 to 225 (WK), and 304 to 306 (GHE).

It belongs to the LDH2/MDH2 oxidoreductase family. DlgD subfamily. In terms of assembly, homodimer.

Its subcellular location is the cytoplasm. The enzyme catalyses 3-dehydro-L-gulonate + NAD(+) = 2,3-dioxo-L-gulonate + NADH + H(+). The catalysed reaction is 3-dehydro-L-gulonate + NADP(+) = 2,3-dioxo-L-gulonate + NADPH + H(+). In terms of biological role, catalyzes the reduction of 2,3-diketo-L-gulonate in the presence of NADH, to form 3-keto-L-gulonate. The chain is 2,3-diketo-L-gulonate reductase from Shigella boydii serotype 4 (strain Sb227).